We begin with the raw amino-acid sequence, 100 residues long: Putative pterin-4-alpha-carbinolamine dehydratase (100 aa).

The protein belongs to the pterin-4-alpha-carbinolamine dehydratase family.

It carries out the reaction (4aS,6R)-4a-hydroxy-L-erythro-5,6,7,8-tetrahydrobiopterin = (6R)-L-erythro-6,7-dihydrobiopterin + H2O. This Bradyrhizobium sp. (strain ORS 278) protein is Putative pterin-4-alpha-carbinolamine dehydratase.